The sequence spans 455 residues: Glutamyl-tRNA reductase (455 aa).

Substrate is bound by residues 49–52 (TCNR), Ser109, 114–116 (ETQ), and Gln120. Cys50 functions as the Nucleophile in the catalytic mechanism. 189–194 (GAGKMG) is a binding site for NADP(+).

This sequence belongs to the glutamyl-tRNA reductase family. In terms of assembly, homodimer.

The enzyme catalyses (S)-4-amino-5-oxopentanoate + tRNA(Glu) + NADP(+) = L-glutamyl-tRNA(Glu) + NADPH + H(+). The protein operates within porphyrin-containing compound metabolism; protoporphyrin-IX biosynthesis; 5-aminolevulinate from L-glutamyl-tRNA(Glu): step 1/2. Functionally, catalyzes the NADPH-dependent reduction of glutamyl-tRNA(Glu) to glutamate 1-semialdehyde (GSA). This chain is Glutamyl-tRNA reductase, found in Bacillus pumilus (strain SAFR-032).